The primary structure comprises 249 residues: Transmembrane protein 150C (249 aa).

The Cytoplasmic segment spans residues 1 to 9; sequence MDGKKCSVW. A helical membrane pass occupies residues 10-30; the sequence is MFLPLVFTLFTSAGLWIVYFI. Over 31-64 the chain is Extracellular; sequence AVEDDKILPLNSAARKSGVKHAPYISFAGDDPPA. A helical transmembrane segment spans residues 65 to 85; that stretch reads SCVFSQVMNMAAFLALVVAVL. Residues 86 to 97 lie on the Cytoplasmic side of the membrane; it reads RFIQLKPKVLNP. The helical transmembrane segment at 98–118 threads the bilayer; sequence WLNISGLVALCLASFGMTLLG. Over 119 to 130 the chain is Extracellular; the sequence is NFQLTNDEEIHN. The chain crosses the membrane as a helical span at residues 131–151; it reads VGTSLTFGFGTLTCWIQAALT. The Cytoplasmic segment spans residues 152 to 168; sequence LKVNIKNEGRRAGIPRV. Residues 169–189 form a helical membrane-spanning segment; that stretch reads ILSAVITLCVVLYFILMAQDI. The Extracellular portion of the chain corresponds to 190–192; sequence HMY. The chain crosses the membrane as a helical span at residues 193–213; that stretch reads AARVQWGLVMCFLAYFGTLAV. Over 214–249 the chain is Cytoplasmic; that stretch reads EFRHYRYEIVCSEYQENFLSFSESLSEASEYQTDQV.

This sequence belongs to the DRAM/TMEM150 family.

The protein localises to the cell membrane. The protein resides in the lysosome membrane. It catalyses the reaction Ca(2+)(in) = Ca(2+)(out). It carries out the reaction Na(+)(in) = Na(+)(out). The enzyme catalyses K(+)(in) = K(+)(out). The catalysed reaction is Mg(2+)(in) = Mg(2+)(out). Nonselective cationic channel with high permeability to Ca(2+). Component of a mechanosensitive cation channel. Confers mechanically activated (MA) currents with slow inactivation kinetics. May contribute to proprioception. This is Transmembrane protein 150C (Tmem150c) from Rattus norvegicus (Rat).